A 302-amino-acid chain; its full sequence is Mas-related G-protein coupled receptor member A3 (302 aa).

Residues 1-17 lie on the Extracellular side of the membrane; that stretch reads MNETIPGSIDIETLIPD. N-linked (GlcNAc...) asparagine glycosylation is present at N2. Residues 18 to 38 form a helical membrane-spanning segment; sequence LMIIIFGLVGLTGNAIVFWLL. Residues 39-46 lie on the Cytoplasmic side of the membrane; it reads GFRMHRTA. The chain crosses the membrane as a helical span at residues 47–67; that stretch reads FLVYILNLALADFLFLLCHII. An N-linked (GlcNAc...) asparagine glycan is attached at N68. Over 68 to 81 the chain is Extracellular; the sequence is NSTVDLLKFTLPKG. Residues 82–102 traverse the membrane as a helical segment; sequence IFAFCFHTIKRVLYITGLSML. Residues 103 to 129 lie on the Cytoplasmic side of the membrane; the sequence is SAISTERCLSVLCPIWYHCRRPEHTST. A helical membrane pass occupies residues 130–150; sequence VMCAVIWVLSLLICILDGYFC. The Extracellular portion of the chain corresponds to 151 to 167; sequence GYLDNHYFNYSVCQAWD. N-linked (GlcNAc...) asparagine glycosylation occurs at N159. A helical transmembrane segment spans residues 168–188; that stretch reads IFIGAYLMFLFVVLCLSTLAL. The Cytoplasmic portion of the chain corresponds to 189–211; that stretch reads LARLFCGARNMKFTRLFVTIMLT. Residues 212-232 traverse the membrane as a helical segment; that stretch reads VLVFLLCGLPWGITWFLLFWI. The Extracellular segment spans residues 233–242; sequence APGVFVLDYS. A helical membrane pass occupies residues 243-263; that stretch reads PLLVLTAINSCANPIIYFFVG. At 264–302 the chain is on the cytoplasmic side; that stretch reads SFRQRLNKQTLKMVLQKALQDTPETPENMVEMSRNKAEP.

It belongs to the G-protein coupled receptor 1 family. Mas subfamily. Expressed exclusively in dorsal root ganglia and nodose ganglia. Expressed in a subset of sensory neurons that includes nociceptors. Expressed in the subclass of non-peptidergic sensory neurons that are IB4(+) and VR1(-).

It localises to the cell membrane. In terms of biological role, orphan receptor. May be a receptor for RFamide-family neuropeptides such as NPFF and NPAF, which are analgesic in vivo. May regulate nociceptor function and/or development, including the sensation or modulation of pain. Activated by the antimalarial drug chloroquine. Mediates chloroquine-induced itch, in a histamine-independent manner. The protein is Mas-related G-protein coupled receptor member A3 (Mrgpra3) of Mus musculus (Mouse).